The chain runs to 102 residues: Circadian clock oscillator protein KaiB (102 aa).

Belongs to the KaiB family. Undergoes a major conformational rearrangment; in the free state forms homotetramers with 2 dimers. When bound to the CI domain of KaiC switches to a monomeric thioredoxin-fold (KaiB(fs)). Monomers, homodimers and homotetramers are detected in solution; at low concentrations only monomers are seen. In vitro forms KaiC(6):KaiB(1) and KaiC(6):KaiB(6) complexes. Only associates with 'Ser-431'-phosphorylated KaiC (and not with doubly phosphorylated KaiC). Complex formation between KaiB and KaiC is regulated by the phosphorylation state of KaiC and by an ATP hydrolysis-driven conformation change in the CI ring of KaiC; complex formation is slow. Slow complex formation is crucial for the timing of the circadian period. In low resolution cryo-EM forms a KaiC(6):KaiB(6) complex. The KaiABC complex composition changes during the circadian cycle to control KaiC phosphorylation. Complexes KaiC(6), KaiA(2-4):KaiC(6), KaiB(6):KaiC(6) and KaiC(6):KaiB(6):KaiA(12) are among the most important forms, many form cooperatively. The KaiB:KaiC complex is more prevalent at 16 hours (in the dark) than at 4 hours (in the light) in the circadian cycle. The KaiA:KaiB complex is only found at 20-24 hours in the circadian cycle (subjective night). Binds to the CI domain of KaiC; SasA and KaiB compete to bind to the CI domain.

It is found in the cytoplasm. The protein resides in the cell membrane. In terms of biological role, key component of the KaiABC oscillator complex, which constitutes the main circadian regulator in cyanobacteria. Complex composition changes during the circadian cycle to control KaiC phosphorylation. KaiA stimulates KaiC autophosphorylation, while KaiB sequesters KaiA, leading to KaiC autodephosphorylation. KaiA binding to the KaiC CII domain yields KaiA(2-4):KaiC(6) complexes which stimulate KaiC autophosphorylation. Phospho-Ser-431 KaiC accumulation triggers binding of KaiB to form the KaiB(6):KaiC(6) complex, leading to changes in the output regulators CikA and SasA. KaiB switches to a thioredoxin-like fold (KaiB(fs)) in complex with KaiC. KaiB(6):KaiC(6) formation exposes a site for KaiA binding that sequesters KaiA from the CII domain, making the KaiC(6):KaiB(6):KaiA(12) complex that results in KaiC autodephosphorylation. Complete dephosphorylation of KaiC leads to dissociation of KaiA(2):KaiB(1), completing 1 cycle of the Kai oscillator. Circadian oscillations can be generated in vitro by incubating KaiA, KaiB and KaiC with 1 mM ATP. The cycle is self-sustainable for at least 3 cycles and resistant to temperature changes. A very robust clock is reconstituted with KaiA, KaiB, KaiC, SasA, CikA and RpaA; output is measured by transcription from an appropriate reporter. Functionally, a metamorphic protein which reversibly switches between an inactive tetrameric fold and a rare, thioredoxin-like monomeric fold (KaiB(fs)). KaiB(fs) binds phospho-KaiC, KaiA and CikA. KaiA and CikA compete for binding to KaiB(fs), and KaiB(fs) and SasA compete for binding to KaiC, thus the clock oscillator and output signal pathway are tightly coupled. This chain is Circadian clock oscillator protein KaiB, found in Synechococcus elongatus (strain ATCC 33912 / PCC 7942 / FACHB-805) (Anacystis nidulans R2).